The sequence spans 187 residues: Putative protein SSX8 (187 aa).

2 disordered regions span residues 1–21 and 109–187; these read MNGD…SEKR and PKIM…EDDE. The KRAB-related domain maps to 20-83; it reads KRSKAFNDIA…KQATDFQGNY (64 aa). The residue at position 123 (Ser-123) is a Phosphoserine. Positions 152–168 are enriched in basic residues; the sequence is KRSGPKRGRHAWTHRLR.

It belongs to the SSX family. In terms of tissue distribution, not detected in any normal or tumor tissues.

Its function is as follows. Could act as a modulator of transcription. The sequence is that of Putative protein SSX8 from Homo sapiens (Human).